Reading from the N-terminus, the 424-residue chain is Histidine--tRNA ligase (424 aa).

Belongs to the class-II aminoacyl-tRNA synthetase family. As to quaternary structure, homodimer.

The protein resides in the cytoplasm. The catalysed reaction is tRNA(His) + L-histidine + ATP = L-histidyl-tRNA(His) + AMP + diphosphate + H(+). The chain is Histidine--tRNA ligase from Shewanella sediminis (strain HAW-EB3).